Reading from the N-terminus, the 286-residue chain is Glucose import system permease protein GlcT (286 aa).

The next 6 helical transmembrane spans lie at 6–26, 71–91, 103–123, 154–174, 199–219, and 260–280; these read TIIL…LVIW, VILV…LYFL, IVIY…LWLF, LVLV…LAGF, ILIP…FLFS, and VATM…LTVI. The region spanning 63–275 is the ABC transmembrane type-1 domain; that stretch reads LLHSIELSVI…LIATIIIIPY (213 aa).

It belongs to the binding-protein-dependent transport system permease family. In terms of assembly, the complex is composed of two ATP-binding proteins (GlcV), two transmembrane proteins (GlcT and GlcU) and a solute-binding protein (GlcS).

Its subcellular location is the cell membrane. Its function is as follows. Part of the ABC transporter complex GlcSTUV involved in glucose uptake. Responsible for the translocation of the substrate across the membrane. This chain is Glucose import system permease protein GlcT, found in Saccharolobus solfataricus (strain ATCC 35092 / DSM 1617 / JCM 11322 / P2) (Sulfolobus solfataricus).